A 365-amino-acid chain; its full sequence is Chorismate synthase (365 aa).

2 residues coordinate NADP(+): Arg48 and Arg54. Residues 125 to 127 (RSS), 238 to 239 (NA), Ala278, 293 to 297 (KPTSS), and Arg319 contribute to the FMN site.

The protein belongs to the chorismate synthase family. In terms of assembly, homotetramer. FMNH2 is required as a cofactor.

It catalyses the reaction 5-O-(1-carboxyvinyl)-3-phosphoshikimate = chorismate + phosphate. The protein operates within metabolic intermediate biosynthesis; chorismate biosynthesis; chorismate from D-erythrose 4-phosphate and phosphoenolpyruvate: step 7/7. In terms of biological role, catalyzes the anti-1,4-elimination of the C-3 phosphate and the C-6 proR hydrogen from 5-enolpyruvylshikimate-3-phosphate (EPSP) to yield chorismate, which is the branch point compound that serves as the starting substrate for the three terminal pathways of aromatic amino acid biosynthesis. This reaction introduces a second double bond into the aromatic ring system. The polypeptide is Chorismate synthase (Pseudoalteromonas translucida (strain TAC 125)).